The following is an 86-amino-acid chain: Large ribosomal subunit protein bL31B (86 aa).

This sequence belongs to the bacterial ribosomal protein bL31 family. Type B subfamily. Part of the 50S ribosomal subunit.

This Yersinia pseudotuberculosis serotype O:1b (strain IP 31758) protein is Large ribosomal subunit protein bL31B.